A 150-amino-acid chain; its full sequence is MSDVITPGEIDIVGILDLLPHRYPFVMVDRILSIDPGKEIVGLKNVTFNEQYFQGHFPGEPVMPGVLMLEGLAQVGCVHAFYTEPDAVGKKLAFFAGVDKARFRKPVRPGDQLIYKVQLVKEKRSIIFMSAKGYVDDQVVVQAELMASFS.

The active site involves His56.

It belongs to the thioester dehydratase family. FabZ subfamily.

It localises to the cytoplasm. It carries out the reaction a (3R)-hydroxyacyl-[ACP] = a (2E)-enoyl-[ACP] + H2O. Functionally, involved in unsaturated fatty acids biosynthesis. Catalyzes the dehydration of short chain beta-hydroxyacyl-ACPs and long chain saturated and unsaturated beta-hydroxyacyl-ACPs. This Desulfotalea psychrophila (strain LSv54 / DSM 12343) protein is 3-hydroxyacyl-[acyl-carrier-protein] dehydratase FabZ.